The sequence spans 108 residues: Nucleoid-associated protein BP1550 (108 aa).

Residues 87–108 (SQEKMASVTAGMPLPPGMKLPF) are disordered. Residues 99–108 (PLPPGMKLPF) are compositionally biased toward pro residues.

It belongs to the YbaB/EbfC family. As to quaternary structure, homodimer.

The protein resides in the cytoplasm. The protein localises to the nucleoid. Binds to DNA and alters its conformation. May be involved in regulation of gene expression, nucleoid organization and DNA protection. The chain is Nucleoid-associated protein BP1550 from Bordetella pertussis (strain Tohama I / ATCC BAA-589 / NCTC 13251).